We begin with the raw amino-acid sequence, 420 residues long: L-cysteine:1D-myo-inositol 2-amino-2-deoxy-alpha-D-glucopyranoside ligase (420 aa).

Cys-46 is a binding site for Zn(2+). L-cysteinyl-5'-AMP contacts are provided by residues 46 to 49 (CGIT), Thr-61, and 84 to 86 (NVT). Residues 48–58 (ITPYDSTHLGH) carry the 'HIGH' region motif. Positions 194-199 (ERGGDP) match the 'ERGGDP' region motif. Position 235 (Trp-235) interacts with L-cysteinyl-5'-AMP. Cys-239 contacts Zn(2+). Residue 257-259 (GTD) participates in L-cysteinyl-5'-AMP binding. His-264 provides a ligand contact to Zn(2+). An L-cysteinyl-5'-AMP-binding site is contributed by Val-291. A 'KMSKS' region motif is present at residues 297–301 (KMSKS).

It belongs to the class-I aminoacyl-tRNA synthetase family. MshC subfamily. In terms of assembly, monomer. Zn(2+) serves as cofactor.

It carries out the reaction 1D-myo-inositol 2-amino-2-deoxy-alpha-D-glucopyranoside + L-cysteine + ATP = 1D-myo-inositol 2-(L-cysteinylamino)-2-deoxy-alpha-D-glucopyranoside + AMP + diphosphate + H(+). Functionally, catalyzes the ATP-dependent condensation of GlcN-Ins and L-cysteine to form L-Cys-GlcN-Ins. In Beutenbergia cavernae (strain ATCC BAA-8 / DSM 12333 / CCUG 43141 / JCM 11478 / NBRC 16432 / NCIMB 13614 / HKI 0122), this protein is L-cysteine:1D-myo-inositol 2-amino-2-deoxy-alpha-D-glucopyranoside ligase.